The primary structure comprises 103 residues: Small ribosomal subunit protein uS10 (103 aa).

This sequence belongs to the universal ribosomal protein uS10 family. Part of the 30S ribosomal subunit.

In terms of biological role, involved in the binding of tRNA to the ribosomes. The sequence is that of Small ribosomal subunit protein uS10 from Acinetobacter baumannii (strain AB307-0294).